The primary structure comprises 203 residues: Imidazoleglycerol-phosphate dehydratase (203 aa).

Residues 184–203 form a disordered region; sequence DPRRSSQIPSSKGVLEQAGQ.

Belongs to the imidazoleglycerol-phosphate dehydratase family.

Its subcellular location is the cytoplasm. It catalyses the reaction D-erythro-1-(imidazol-4-yl)glycerol 3-phosphate = 3-(imidazol-4-yl)-2-oxopropyl phosphate + H2O. It participates in amino-acid biosynthesis; L-histidine biosynthesis; L-histidine from 5-phospho-alpha-D-ribose 1-diphosphate: step 6/9. This Prochlorococcus marinus (strain NATL1A) protein is Imidazoleglycerol-phosphate dehydratase.